The following is a 137-amino-acid chain: MDVFMKGLSMAKEGVVAAAEKTKQGVTEAAEKTKEGVLYVGSKTKEGVVQGVASVAEKTKEQASHLGGAVFSGAGNIAAATGLVKKEEFPTDLKPEEVAQEAAEEPLIEPLMEPEGESYEDSPQEEYQEYEPEAKGP.

Repeat copies occupy residues 20–30 and 31–41. The interval 20–67 is 4 X 11 AA tandem repeats of [EGS]-K-T-K-[EQ]-[GQ]-V-X(4); that stretch reads EKTKQGVTEAAEKTKEGVLYVGSKTKEGVVQGVASVAEKTKEQASHLG. A 3; approximate repeat occupies 42 to 56; it reads SKTKEGVVQGVASVA. Copy 4 of the repeat occupies 57 to 67; it reads EKTKEQASHLG. Basic and acidic residues predominate over residues 88–97; the sequence is EFPTDLKPEE. Residues 88–137 form a disordered region; it reads EFPTDLKPEEVAQEAAEEPLIEPLMEPEGESYEDSPQEEYQEYEPEAKGP. The span at 98-131 shows a compositional bias: acidic residues; sequence VAQEAAEEPLIEPLMEPEGESYEDSPQEEYQEYE. Serine 118 carries the post-translational modification Phosphoserine; by BARK1, CK2 and GRK5.

Belongs to the synuclein family. Phosphorylated. Phosphorylation by G-protein coupled receptor kinases (GRK) is more efficient than phosphorylation by CK1, CK2 and CaM-kinase II. Expressed specifically in brain.

Its subcellular location is the cytoplasm. Functionally, may be involved in neuronal plasticity. The polypeptide is Beta-synuclein (Sncb) (Rattus norvegicus (Rat)).